A 157-amino-acid chain; its full sequence is ATP synthase subunit delta (157 aa).

Belongs to the ATPase delta chain family. As to quaternary structure, F-type ATPases have 2 components, F(1) - the catalytic core - and F(0) - the membrane proton channel. F(1) has five subunits: alpha(3), beta(3), gamma(1), delta(1), epsilon(1). F(0) has three main subunits: a(1), b(2) and c(10-14). The alpha and beta chains form an alternating ring which encloses part of the gamma chain. F(1) is attached to F(0) by a central stalk formed by the gamma and epsilon chains, while a peripheral stalk is formed by the delta and b chains.

The protein localises to the cell membrane. Functionally, f(1)F(0) ATP synthase produces ATP from ADP in the presence of a proton or sodium gradient. F-type ATPases consist of two structural domains, F(1) containing the extramembraneous catalytic core and F(0) containing the membrane proton channel, linked together by a central stalk and a peripheral stalk. During catalysis, ATP synthesis in the catalytic domain of F(1) is coupled via a rotary mechanism of the central stalk subunits to proton translocation. This protein is part of the stalk that links CF(0) to CF(1). It either transmits conformational changes from CF(0) to CF(1) or is implicated in proton conduction. This chain is ATP synthase subunit delta, found in Chloroflexus aurantiacus (strain ATCC 29364 / DSM 637 / Y-400-fl).